The chain runs to 429 residues: Ribosomal RNA small subunit methyltransferase B (429 aa).

Residues 254 to 260 (CAAPGGK), Asp-277, Asp-303, and Asp-322 each bind S-adenosyl-L-methionine. The active-site Nucleophile is the Cys-375. Positions 397–419 (ALSETGTPDQPGQQNLPGGEEGD) are disordered. Positions 400-412 (ETGTPDQPGQQNL) are enriched in polar residues.

This sequence belongs to the class I-like SAM-binding methyltransferase superfamily. RsmB/NOP family.

The protein localises to the cytoplasm. The enzyme catalyses cytidine(967) in 16S rRNA + S-adenosyl-L-methionine = 5-methylcytidine(967) in 16S rRNA + S-adenosyl-L-homocysteine + H(+). Its function is as follows. Specifically methylates the cytosine at position 967 (m5C967) of 16S rRNA. This chain is Ribosomal RNA small subunit methyltransferase B, found in Salmonella paratyphi B (strain ATCC BAA-1250 / SPB7).